A 334-amino-acid polypeptide reads, in one-letter code: L-lactate dehydrogenase B chain (334 aa).

30 to 58 (GQVGMACAVSVLLKELADELALVDILEDK) is an NAD(+) binding site. Residues arginine 107, asparagine 139, and arginine 170 each coordinate substrate. Asparagine 139 contributes to the NAD(+) binding site. The Proton acceptor role is filled by histidine 194. A substrate-binding site is contributed by threonine 249.

This sequence belongs to the LDH/MDH superfamily. LDH family. In terms of assembly, homotetramer.

It localises to the cytoplasm. The enzyme catalyses (S)-lactate + NAD(+) = pyruvate + NADH + H(+). The protein operates within fermentation; pyruvate fermentation to lactate; (S)-lactate from pyruvate: step 1/1. In terms of biological role, interconverts simultaneously and stereospecifically pyruvate and lactate with concomitant interconversion of NADH and NAD(+). This is L-lactate dehydrogenase B chain (ldhb) from Xenopus laevis (African clawed frog).